The chain runs to 1429 residues: MEENTFGVQQIQPNVISVRLFKRKVGGLGFLVKERVSKPPVIISDLIRGGAAEQSGLIQAGDIILAVNDRPLVDLSYDSALEVLRGIASETHVVLILRGPEGFTTHLETTFTGDGTPKTIRVTQPLGPPTKAVDLSHQPSASKDQSLAVDRVTGLGNGPQHAQGHGQGAGSVSQANGVAIDPTMKSTKANLQDIGEHDELLKEIEPVLSILNSGSKATNRGGPAKAEMKDTGIQVDRDLDGKSHKAPPLGGDNDRVFNDLWGKDNVPVILNNPYSEKEQSPTSGKQSPTKNGSPSRCPRFLKVKNWETDVVLTDTLHLKSTLETGCTEHICMGSIMLPSQHTRKPEDVRTKDQLFPLAKEFLDQYYSSIKRFGSKAHMDRLEEVNKEIESTSTYQLKDTELIYGAKHAWRNASRCVGRIQWSKLQVFDARDCTTAHGMFNYICNHVKYATNKGNLRSAITIFPQRTDGKHDFRVWNSQLIRYAGYKQPDGSTLGDPANVQFTEICIQQGWKAPRGRFDVLPLLLQANGNDPELFQIPPELVLEVPIRHPKFDWFKDLGLKWYGLPAVSNMLLEIGGLEFSACPFSGWYMGTEIGVRDYCDNSRYNILEEVAKKMDLDMRKTSSLWKDQALVEINIAVLYSFQSDKVTIVDHHSATESFIKHMENEYRCRGGCPADWVWIVPPMSGSITPVFHQEMLNYRLTPSFEYQPDPWNTHVWKGTNGTPTKRRAIGFKKLAEAVKFSAKLMGQAMAKRVKATILYATETGKSQAYAKTLCEIFKHAFDAKAMSMEEYDIVHLEHEALVLVVTSTFGNGDPPENGEKFGCALMEMRHPNSVQEERKSYKVRFNSVSSYSDSRKSSGDGPDLRDNFESTGPLANVRFSVFGLGSRAYPHFCAFGHAVDTLLEELGGERILKMREGDELCGQEEAFRTWAKKVFKAACDVFCVGDDVNIEKPNNSLISNDRSWKRNKFRLTYVAEAPDLTQGLSNVHKKRVSAARLLSRQNLQSPKFSRSTIFVRLHTNGNQELQYQPGDHLGVFPGNHEDLVNALIERLEDAPPANHVVKVEMLEERNTALGVISNWKDESRLPPCTIFQAFKYYLDITTPPTPLQLQQFASLATNEKEKQRLLVLSKGLQEYEEWKWGKNPTMVEVLEEFPSIQMPATLLLTQLSLLQPRYYSISSSPDMYPDEVHLTVAIVSYHTRDGEGPVHHGVCSSWLNRIQADDVVPCFVRGAPSFHLPRNPQVPCILVGPGTGIAPFRSFWQQRQFDIQHKGMNPCPMVLVFGCRQSKIDHIYREETLQAKNKGVFRELYTAYSREPDRPKKYVQDVLQEQLAESVYRALKEQGGHIYVCGDVTMAADVLKAIQRIMTQQGKLSEEDAGVFISRLRDDNRYHEDIFGVTLRTYEVTNRLRSESIAFIEESKKDADEVFSS.

Residues 1–200 (MEENTFGVQQ…LQDIGEHDEL (200 aa)) form an interaction with NOSIP region. Residues 17–99 (SVRLFKRKVG…ETHVVLILRG (83 aa)) enclose the PDZ domain. 3 disordered regions span residues 152–174 (VTGLGNGPQHAQGHGQGAGSVSQ), 214–255 (GSKA…DNDR), and 271–298 (NNPYSEKEQSPTSGKQSPTKNGSPSRCP). A compositionally biased stretch (low complexity) spans 160–174 (QHAQGHGQGAGSVSQ). Positions 163-240 (QGHGQGAGSV…TGIQVDRDLD (78 aa)) are interaction with DYNLL1/PIN. Residues 226 to 243 (AEMKDTGIQVDRDLDGKS) show a composition bias toward basic and acidic residues. At S280 the chain carries Phosphoserine. Residues 280-294 (SPTSGKQSPTKNGSP) show a composition bias toward polar residues. Residue S334 coordinates (6R)-L-erythro-5,6,7,8-tetrahydrobiopterin. C415 contacts heme b. L-arginine contacts are provided by Q478, W587, Y588, and E592. (6R)-L-erythro-5,6,7,8-tetrahydrobiopterin is bound by residues V677, W678, and F691. Position 706 (Y706) interacts with heme b. Positions 725–745 (KRRAIGFKKLAEAVKFSAKLM) are calmodulin-binding. The region spanning 755–935 (ATILYATETG…AFRTWAKKVF (181 aa)) is the Flavodoxin-like domain. Residues T761, E762, T763, K765, S766, S807, T808, and G812 each coordinate FMN. A phosphoserine mark is found at S847, S857, and S858. FMN contacts are provided by S886, H891, C893, E919, and Q923. An FAD-binding FR-type domain is found at 990-1237 (KRVSAARLLS…VRGAPSFHLP (248 aa)). R1010 contacts NADP(+). Residues H1032, R1173, Y1174, Y1175, S1176, T1191, and A1193 each contribute to the FAD site. S1196 lines the NADP(+) pocket. Residues Y1197, V1210, C1211, and S1212 each contribute to the FAD site. Residues T1251, R1284, S1313, R1314, K1320, Y1322, Q1324, D1357, T1398, and R1400 each coordinate NADP(+).

It belongs to the NOS family. As to quaternary structure, homodimer. Interacts with DLG4 (via N-terminal tandem pair of PDZ domains); the interaction possibly being prevented by the association between NOS1 and CAPON. Forms a ternary complex with CAPON and RASD1. Forms a ternary complex with CAPON and SYN1. Interacts with ZDHHC23. Interacts with NOSIP; which may impair its synaptic location. Interacts with HTR4. Interacts with SLC6A4. Interacts with VAC14. Forms a complex with ASL, ASS1 and SLC7A1; the complex regulates cell-autonomous L-arginine synthesis and citrulline recycling while channeling extracellular L-arginine to nitric oxide synthesis pathway. Interacts with DMD; localizes NOS1 to sarcolemma in muscle cells. Interacts with DYNLL1; inhibits the nitric oxide synthase activity. Heme b serves as cofactor. FAD is required as a cofactor. It depends on FMN as a cofactor. The cofactor is (6R)-L-erythro-5,6,7,8-tetrahydrobiopterin. Post-translationally, ubiquitinated; mediated by STUB1/CHIP in the presence of Hsp70 and Hsp40 (in vitro). In terms of tissue distribution, isoform N-NOS-1 is expressed in brain and colorectum. Found in the Auerbach's plexus of the enteric nervous system. Isoform PNNOS is expressed in the penis, urethra, prostate, and skeletal muscle, and coexists with the cerebellar nnos in the pelvic plexus, bladder and liver, and is detectable in the cerebellum.

It localises to the cell membrane. It is found in the sarcolemma. The protein localises to the cell projection. Its subcellular location is the dendritic spine. It catalyses the reaction 2 L-arginine + 3 NADPH + 4 O2 + H(+) = 2 L-citrulline + 2 nitric oxide + 3 NADP(+) + 4 H2O. Stimulated by calcium/calmodulin. Inhibited by DYNLL1 that prevents the dimerization of the protein. Inhibited by NOSIP. Functionally, produces nitric oxide (NO) which is a messenger molecule with diverse functions throughout the body. In the brain and peripheral nervous system, NO displays many properties of a neurotransmitter. Inhibitory transmitter for non-adrenergic and non-cholinergic nerves in the colorectum. Probably has nitrosylase activity and mediates cysteine S-nitrosylation of cytoplasmic target proteins such SRR. Inhibitory transmitter for non-adrenergic and non-cholinergic nerves in the colorectum. The sequence is that of Nitric oxide synthase 1 from Rattus norvegicus (Rat).